Reading from the N-terminus, the 309-residue chain is HPr kinase/phosphorylase (309 aa).

Residues H139 and K160 contribute to the active site. G154–S161 is a binding site for ATP. S161 lines the Mg(2+) pocket. D178 functions as the Proton acceptor; for phosphorylation activity. Proton donor; for dephosphorylation activity in the catalytic mechanism. The segment at I202 to D211 is important for the catalytic mechanism of both phosphorylation and dephosphorylation. E203 lines the Mg(2+) pocket. R244 is an active-site residue. Positions P265–R270 are important for the catalytic mechanism of dephosphorylation.

Belongs to the HPrK/P family. Homohexamer. Requires Mg(2+) as cofactor.

The catalysed reaction is [HPr protein]-L-serine + ATP = [HPr protein]-O-phospho-L-serine + ADP + H(+). The enzyme catalyses [HPr protein]-O-phospho-L-serine + phosphate + H(+) = [HPr protein]-L-serine + diphosphate. In terms of biological role, catalyzes the ATP- as well as the pyrophosphate-dependent phosphorylation of a specific serine residue in HPr, a phosphocarrier protein of the phosphoenolpyruvate-dependent sugar phosphotransferase system (PTS). HprK/P also catalyzes the pyrophosphate-producing, inorganic phosphate-dependent dephosphorylation (phosphorolysis) of seryl-phosphorylated HPr (P-Ser-HPr). The two antagonistic activities of HprK/P are regulated by several intracellular metabolites, which change their concentration in response to the absence or presence of rapidly metabolisable carbon sources (glucose, fructose, etc.) in the growth medium. Therefore, by controlling the phosphorylation state of HPr, HPrK/P is a sensor enzyme that plays a major role in the regulation of carbon metabolism and sugar transport: it mediates carbon catabolite repression (CCR), and regulates PTS-catalyzed carbohydrate uptake and inducer exclusion. This chain is HPr kinase/phosphorylase, found in Lachnoclostridium phytofermentans (strain ATCC 700394 / DSM 18823 / ISDg) (Clostridium phytofermentans).